The primary structure comprises 206 residues: dITP/XTP pyrophosphatase (206 aa).

7 to 12 (SSHGYK) serves as a coordination point for substrate. The active-site Proton acceptor is Asp-70. Asp-70 is a Mg(2+) binding site. Residues Thr-71, 154-157 (FGYD), Lys-177, and 182-183 (HR) each bind substrate.

This sequence belongs to the HAM1 NTPase family. As to quaternary structure, homodimer. The cofactor is Mg(2+).

It carries out the reaction XTP + H2O = XMP + diphosphate + H(+). It catalyses the reaction dITP + H2O = dIMP + diphosphate + H(+). The catalysed reaction is ITP + H2O = IMP + diphosphate + H(+). Functionally, pyrophosphatase that catalyzes the hydrolysis of nucleoside triphosphates to their monophosphate derivatives, with a high preference for the non-canonical purine nucleotides XTP (xanthosine triphosphate), dITP (deoxyinosine triphosphate) and ITP. Seems to function as a house-cleaning enzyme that removes non-canonical purine nucleotides from the nucleotide pool, thus preventing their incorporation into DNA/RNA and avoiding chromosomal lesions. This is dITP/XTP pyrophosphatase from Chlamydia pneumoniae (Chlamydophila pneumoniae).